The chain runs to 224 residues: Lipoprotein-releasing system ATP-binding protein LolD (224 aa).

Positions 5-224 constitute an ABC transporter domain; it reads LRAENIKKVI…GKVVGEITRV (220 aa). 37 to 44 provides a ligand contact to ATP; the sequence is GASGSGKS.

Belongs to the ABC transporter superfamily. Lipoprotein translocase (TC 3.A.1.125) family. In terms of assembly, the complex is composed of two ATP-binding proteins (LolD) and two transmembrane proteins (LolC and LolE).

The protein resides in the cell inner membrane. In terms of biological role, part of the ABC transporter complex LolCDE involved in the translocation of mature outer membrane-directed lipoproteins, from the inner membrane to the periplasmic chaperone, LolA. Responsible for the formation of the LolA-lipoprotein complex in an ATP-dependent manner. The polypeptide is Lipoprotein-releasing system ATP-binding protein LolD (Aquifex aeolicus (strain VF5)).